The chain runs to 188 residues: Phosphatidylinositol N-acetylglucosaminyltransferase subunit H (188 aa).

Belongs to the PIGH family. In terms of assembly, component of the glycosylphosphatidylinositol-N-acetylglucosaminyltransferase (GPI-GnT) complex composed at least by PIGA, PIGC, PIGH, PIGP, PIGQ, PIGY and DPM2. Interacts with PIGQ.

Its subcellular location is the cytoplasm. It functions in the pathway glycolipid biosynthesis; glycosylphosphatidylinositol-anchor biosynthesis. Its function is as follows. Part of the glycosylphosphatidylinositol-N-acetylglucosaminyltransferase (GPI-GnT) complex that catalyzes the transfer of N-acetylglucosamine from UDP-N-acetylglucosamine to phosphatidylinositol and participates in the first step of GPI biosynthesis. This Mus musculus (Mouse) protein is Phosphatidylinositol N-acetylglucosaminyltransferase subunit H.